The sequence spans 362 residues: Tyrosine-protein kinase SRK2 (362 aa).

Residues 1–70 (TFLVRESESK…GLCVNLRQPC (70 aa)) enclose the SH2 domain. Residues 95 to 348 (ITLIRKLGAG…ALQWRLEDFF (254 aa)) enclose the Protein kinase domain. ATP-binding positions include 101 to 109 (LGAGQFGEV) and K123. Residue D214 is the Proton acceptor of the active site.

It belongs to the protein kinase superfamily. Tyr protein kinase family.

The protein localises to the cytoplasm. It carries out the reaction L-tyrosyl-[protein] + ATP = O-phospho-L-tyrosyl-[protein] + ADP + H(+). The chain is Tyrosine-protein kinase SRK2 (SRK2) from Spongilla lacustris (Freshwater sponge).